The chain runs to 363 residues: Thioredoxin domain-containing protein C13F5.05, mitochondrial (363 aa).

The N-terminal 24 residues, 1–24, are a transit peptide targeting the mitochondrion; sequence MLFRIPTLFTLFLACFSLVSGVFG. The region spanning 32–141 is the Thioredoxin domain; that stretch reads NTIELNSKNF…KSLQKFVSDS (110 aa).

It is found in the mitochondrion. In Schizosaccharomyces pombe (strain 972 / ATCC 24843) (Fission yeast), this protein is Thioredoxin domain-containing protein C13F5.05, mitochondrial.